A 547-amino-acid chain; its full sequence is Elongator complex protein 3 (547 aa).

One can recognise a Radical SAM core domain in the interval 82–372; that stretch reads RTASGIAVVA…YRVQRDIPMP (291 aa). Positions 99, 109, and 112 each coordinate [4Fe-4S] cluster. Ser-161 carries the phosphoserine modification. Residue Lys-164 participates in acetyl-CoA binding. A Phosphotyrosine modification is found at Tyr-202. Lys-229 carries the N6-methyllysine modification. Tyr-251 bears the Phosphotyrosine mark. The 152-residue stretch at 396–547 folds into the N-acetyltransferase domain; that stretch reads IQCRDVRTRE…QGPYMVKTLE (152 aa). Residues 474–477, 497–499, and Tyr-530 each bind acetyl-CoA; these read ELHV and FGM.

The protein belongs to the ELP3 family. As to quaternary structure, component of the elongator complex which consists of ELP1, ELP2, ELP3, ELP4, ELP5 and ELP6. ELP1, ELP2 and ELP3 form the elongator core complex. Interacts with alpha-tubulin. [4Fe-4S] cluster is required as a cofactor. Tyrosine-phosphorylated; phosphorylation on Tyr-202 does not affect elongator complex integrity or ELP3 protein stability. Also serine/threonine-phosphorylated.

The protein localises to the cytoplasm. The protein resides in the nucleus. It carries out the reaction uridine(34) in tRNA + acetyl-CoA + S-adenosyl-L-methionine + H2O = 5-(carboxymethyl)uridine(34) in tRNA + 5'-deoxyadenosine + L-methionine + CoA + 2 H(+). It participates in tRNA modification; 5-methoxycarbonylmethyl-2-thiouridine-tRNA biosynthesis. In terms of biological role, catalytic tRNA acetyltransferase subunit of the elongator complex which is required for multiple tRNA modifications, including mcm5U (5-methoxycarbonylmethyl uridine), mcm5s2U (5-methoxycarbonylmethyl-2-thiouridine), and ncm5U (5-carbamoylmethyl uridine). In the elongator complex, acts as a tRNA uridine(34) acetyltransferase by mediating formation of carboxymethyluridine in the wobble base at position 34 in tRNAs. May also act as a protein lysine acetyltransferase by mediating acetylation of target proteins; such activity is however unclear in vivo and recent evidences suggest that ELP3 primarily acts as a tRNA acetyltransferase. Involved in neurogenesis: regulates the migration and branching of projection neurons in the developing cerebral cortex, through a process depending on alpha-tubulin acetylation. Required for acetylation of GJA1 in the developing cerebral cortex. In Bos taurus (Bovine), this protein is Elongator complex protein 3.